A 423-amino-acid chain; its full sequence is COP9 signalosome complex subunit 3 (423 aa).

Ala-2 is modified (N-acetylalanine). The 169-residue stretch at 197–365 folds into the PCI domain; the sequence is NFERALYFYE…GMVSFHDNPE (169 aa). A disordered region spans residues 402-423; sequence QFVQKSMGSQEDDSGNKPSSYS. Phosphoserine is present on residues Ser-407, Ser-410, and Ser-423.

The protein belongs to the CSN3 family. As to quaternary structure, component of the CSN complex, composed of COPS1/GPS1, COPS2, COPS3, COPS4, COPS5, COPS6, COPS7 (COPS7A or COPS7B), COPS8 and COPS9. In the complex, it probably interacts directly with COPS1, COPS4, COPS8 and COPS9. Interacts with CK2 and PKD. Interacts with the translation initiation factor EIF3S6 and IKBKG. Interacts with ERCC6.

It localises to the cytoplasm. It is found in the nucleus. Functionally, component of the COP9 signalosome complex (CSN), a complex involved in various cellular and developmental processes. The CSN complex is an essential regulator of the ubiquitin (Ubl) conjugation pathway by mediating the deneddylation of the cullin subunits of SCF-type E3 ligase complexes, leading to decrease the Ubl ligase activity of SCF-type complexes such as SCF, CSA or DDB2. The complex is also involved in phosphorylation of p53/TP53, c-jun/JUN, IkappaBalpha/NFKBIA, ITPK1 and IRF8/ICSBP, possibly via its association with CK2 and PKD kinases. CSN-dependent phosphorylation of TP53 and JUN promotes and protects degradation by the Ubl system, respectively. Essential to maintain the survival of epiblast cells and thus the development of the postimplantation embryo. The sequence is that of COP9 signalosome complex subunit 3 (COPS3) from Bos taurus (Bovine).